The primary structure comprises 110 residues: MVDKKSRGHINSDLEFKKKKHAREMKYQVLSFGLMIGLTIVAFLTVATDGVGSWFTIPFIILLAAIQVIFQLYYFMHMNQKGHEAPALFLYSGVFVAFITVLAFVTIIWW.

Helical transmembrane passes span Tyr27 to Ala47, Gly50 to Phe70, and Leu88 to Ile108.

It belongs to the cytochrome c oxidase bacterial subunit 4 family.

Its subcellular location is the cell membrane. The enzyme catalyses 4 Fe(II)-[cytochrome c] + O2 + 8 H(+)(in) = 4 Fe(III)-[cytochrome c] + 2 H2O + 4 H(+)(out). The protein is Cytochrome c oxidase subunit 4B (ctaF) of Bacillus subtilis (strain 168).